An 806-amino-acid chain; its full sequence is Fibroblast growth factor receptor 3 (806 aa).

An N-terminal signal peptide occupies residues 1-19 (MRAAWGSVWCLCLAAAVGA). The Extracellular portion of the chain corresponds to 20-364 (LPAARRRGAE…ELMEMDDSGS (345 aa)). One can recognise an Ig-like C2-type 1 domain in the interval 24–124 (RRRGAERSGG…VLGNFTVRVT (101 aa)). Cys61 and Cys107 are disulfide-bonded. N-linked (GlcNAc...) asparagine glycans are attached at residues Asn83, Asn96, and Asn118. The interval 121–146 (VRVTDSPSSGDDEDDDDESEDTGVPF) is disordered. Residues 130–141 (GDDEDDDDESED) are compositionally biased toward acidic residues. Ig-like C2-type domains are found at residues 150–238 (PDKM…YQLD) and 247–349 (PILQ…AWLT). Cys170 and Cys222 are disulfide-bonded. N-linked (GlcNAc...) asparagine glycans are attached at residues Asn219, Asn256, Asn288, Asn309, and Asn322. A disulfide bridge links Cys269 with Cys333. Residues 365-389 (VYAGILSYGTGLVLFILVLVIVIIC) form a helical membrane-spanning segment. Residues 390-806 (RMKMPNKKAM…HVPCNGVIRT (417 aa)) are Cytoplasmic-facing. A Protein kinase domain is found at 466–755 (LTLGKPLGEG…LTMTSTDEYL (290 aa)). ATP contacts are provided by residues 472–480 (LGEGCFGQV) and Lys502. Asp611 functions as the Proton acceptor in the catalytic mechanism. Residues Tyr641, Tyr642, Tyr718, and Tyr754 each carry the phosphotyrosine; by autocatalysis modification.

This sequence belongs to the protein kinase superfamily. Tyr protein kinase family. Fibroblast growth factor receptor subfamily. Monomer. Homodimer after ligand binding. Post-translationally, autophosphorylated. Binding of FGF family members together with heparan sulfate proteoglycan or heparin promotes receptor dimerization and autophosphorylation on tyrosine residues. Autophosphorylation occurs in trans between the two FGFR molecules present in the dimer.

The protein localises to the cell membrane. It carries out the reaction L-tyrosyl-[protein] + ATP = O-phospho-L-tyrosyl-[protein] + ADP + H(+). Its activity is regulated as follows. Present in an inactive conformation in the absence of bound ligand. Ligand binding leads to dimerization and activation by autophosphorylation on tyrosine residues. Its function is as follows. Tyrosine-protein kinase that acts as a cell-surface receptor for fibroblast growth factors and plays an essential role in the regulation of cell proliferation, differentiation and apoptosis. Plays an essential role in the regulation of chondrocyte differentiation, proliferation and apoptosis, and is required for normal skeleton development. Regulates both osteogenesis and postnatal bone mineralization by osteoblasts. Promotes apoptosis in chondrocytes, but can also promote cancer cell proliferation. Phosphorylates PLCG1, CBL and FRS2. Ligand binding leads to the activation of several signaling cascades. Activation of PLCG1 leads to the production of the cellular signaling molecules diacylglycerol and inositol 1,4,5-trisphosphate. Phosphorylation of FRS2 triggers recruitment of GRB2, GAB1, PIK3R1 and SOS1, and mediates activation of RAS, MAPK1/ERK2, MAPK3/ERK1 and the MAP kinase signaling pathway, as well as of the AKT1 signaling pathway. The chain is Fibroblast growth factor receptor 3 (FGFR3) from Gallus gallus (Chicken).